We begin with the raw amino-acid sequence, 54 residues long: Rubredoxin (54 aa).

A Rubredoxin-like domain is found at M1–E54. Positions 6, 9, 39, and 42 each coordinate Fe cation.

The protein belongs to the rubredoxin family. Fe(3+) is required as a cofactor.

In terms of biological role, rubredoxin is a small nonheme, iron protein lacking acid-labile sulfide. Its single Fe, chelated to 4 Cys, functions as an electron acceptor and may also stabilize the conformation of the molecule. Functions as an intermediate component in the electron transfer chain: NADH-&gt;NROR-&gt;Rd-&gt;FprA1/2 in which Rd serves as the proximal electron donor to the FDPs that exhibit H(2)O-forming NADH oxidase activity. Also functions as the proximal electron donor to the Dfx and revRbr proteins that display superoxide reductase (SOR) and NADH peroxidase activity, respectively. Therefore, is a key electron carrier in an efficient multienzyme complex that can scavenge O(2) and reactive oxygen species (ROS), and thus plays an important role in the oxidative stress defense system in C.acetobutylicum, an obligate anaerobic bacterium. The chain is Rubredoxin (rd) from Clostridium acetobutylicum (strain ATCC 824 / DSM 792 / JCM 1419 / IAM 19013 / LMG 5710 / NBRC 13948 / NRRL B-527 / VKM B-1787 / 2291 / W).